Here is a 366-residue protein sequence, read N- to C-terminus: Holliday junction branch migration complex subunit RuvB (366 aa).

The interval 1–50 is disordered; the sequence is MAIISSKKQPPEPNGEPKQRRESAKAPSTENILKPEAAIDEQEQQEEGIR. Residues 13-210 are large ATPase domain (RuvB-L); it reads PNGEPKQRRE…FGLIQKLRFY (198 aa). The span at 15–24 shows a compositional bias: basic and acidic residues; it reads GEPKQRRESA. Residues Ile49, Arg50, Gly91, Lys94, Thr95, Thr96, 157–159, Arg200, Tyr210, and Arg247 each bind ATP; that span reads EDY. A Mg(2+)-binding site is contributed by Thr95. Residues 211-281 form a small ATPAse domain (RuvB-S) region; sequence EVDELTQIVL…IASEALQLFQ (71 aa). The segment at 284 to 366 is head domain (RuvB-H); sequence PCGLDWTDRQ…TPPNEQLSLL (83 aa). DNA is bound by residues Arg339 and Arg344.

The protein belongs to the RuvB family. In terms of assembly, homohexamer. Forms an RuvA(8)-RuvB(12)-Holliday junction (HJ) complex. HJ DNA is sandwiched between 2 RuvA tetramers; dsDNA enters through RuvA and exits via RuvB. An RuvB hexamer assembles on each DNA strand where it exits the tetramer. Each RuvB hexamer is contacted by two RuvA subunits (via domain III) on 2 adjacent RuvB subunits; this complex drives branch migration. In the full resolvosome a probable DNA-RuvA(4)-RuvB(12)-RuvC(2) complex forms which resolves the HJ.

Its subcellular location is the cytoplasm. It carries out the reaction ATP + H2O = ADP + phosphate + H(+). Functionally, the RuvA-RuvB-RuvC complex processes Holliday junction (HJ) DNA during genetic recombination and DNA repair, while the RuvA-RuvB complex plays an important role in the rescue of blocked DNA replication forks via replication fork reversal (RFR). RuvA specifically binds to HJ cruciform DNA, conferring on it an open structure. The RuvB hexamer acts as an ATP-dependent pump, pulling dsDNA into and through the RuvAB complex. RuvB forms 2 homohexamers on either side of HJ DNA bound by 1 or 2 RuvA tetramers; 4 subunits per hexamer contact DNA at a time. Coordinated motions by a converter formed by DNA-disengaged RuvB subunits stimulates ATP hydrolysis and nucleotide exchange. Immobilization of the converter enables RuvB to convert the ATP-contained energy into a lever motion, pulling 2 nucleotides of DNA out of the RuvA tetramer per ATP hydrolyzed, thus driving DNA branch migration. The RuvB motors rotate together with the DNA substrate, which together with the progressing nucleotide cycle form the mechanistic basis for DNA recombination by continuous HJ branch migration. Branch migration allows RuvC to scan DNA until it finds its consensus sequence, where it cleaves and resolves cruciform DNA. The polypeptide is Holliday junction branch migration complex subunit RuvB (Nostoc punctiforme (strain ATCC 29133 / PCC 73102)).